The following is a 298-amino-acid chain: Apolipoprotein E (298 aa).

An N-terminal signal peptide occupies residues 1–18 (MKVLWAALVVTLLAGCQA). 6 repeat units span residues 74–95 (LLMEDTMKEVKAYKSELEQELA), 96–117 (PMAEDTKARLSKELQAAQSRLR), 118–139 (ADMEEVLNRLSQYRGEVQTMMG), 140–161 (QSGEELRARLAAHLRKLRKRLL), 162–183 (RDVEEVQKRMDVYRAGAQEGAE), and 223–244 (GRLEKVGSQARDRLEEVREQME). The 8 X 22 AA approximate tandem repeats stretch occupies residues 74–244 (LLMEDTMKEV…RLEEVREQME (171 aa)). M137 bears the Methionine sulfoxide mark. S141 carries the phosphoserine modification. An LDL and other lipoprotein receptors binding region spans residues 152 to 162 (HLRKLRKRLLR). 156-159 (LRKR) is a heparin binding site. The tract at residues 204–272 (SLPSQPLRER…SWFEPMMEDM (69 aa)) is lipid-binding and lipoprotein association. Residue 218-225 (GEQMRGRL) participates in heparin binding. The specificity for association with VLDL stretch occupies residues 260–272 (RFKSWFEPMMEDM).

Belongs to the apolipoprotein A1/A4/E family. In terms of assembly, homotetramer. May interact with ABCA1; functionally associated with ABCA1 in the biogenesis of HDLs. May interact with APP/A4 amyloid-beta peptide; the interaction is extremely stable in vitro but its physiological significance is unclear. May interact with MAPT. May interact with MAP2. In the cerebrospinal fluid, interacts with secreted SORL1. Interacts with PMEL; this allows the loading of PMEL luminal fragment on ILVs to induce fibril nucleation. Post-translationally, APOE exists as multiple glycosylated and sialylated glycoforms within cells and in plasma. The extent of glycosylation and sialylation are tissue and context specific. Glycated in plasma VLDL. In terms of processing, phosphorylated by FAM20C in the extracellular medium.

It localises to the secreted. The protein resides in the extracellular space. It is found in the extracellular matrix. The protein localises to the extracellular vesicle. Its subcellular location is the endosome. It localises to the multivesicular body. APOE is an apolipoprotein, a protein associating with lipid particles, that mainly functions in lipoprotein-mediated lipid transport between organs via the plasma and interstitial fluids. APOE is a core component of plasma lipoproteins and is involved in their production, conversion and clearance. Apolipoproteins are amphipathic molecules that interact both with lipids of the lipoprotein particle core and the aqueous environment of the plasma. As such, APOE associates with chylomicrons, chylomicron remnants, very low density lipoproteins (VLDL) and intermediate density lipoproteins (IDL) but shows a preferential binding to high-density lipoproteins (HDL). It also binds a wide range of cellular receptors including the LDL receptor/LDLR, the LDL receptor-related proteins LRP1, LRP2 and LRP8 and the very low-density lipoprotein receptor/VLDLR that mediate the cellular uptake of the APOE-containing lipoprotein particles. Finally, APOE also has a heparin-binding activity and binds heparan-sulfate proteoglycans on the surface of cells, a property that supports the capture and the receptor-mediated uptake of APOE-containing lipoproteins by cells. A main function of APOE is to mediate lipoprotein clearance through the uptake of chylomicrons, VLDLs, and HDLs by hepatocytes. APOE is also involved in the biosynthesis by the liver of VLDLs as well as their uptake by peripheral tissues ensuring the delivery of triglycerides and energy storage in muscle, heart and adipose tissues. By participating in the lipoprotein-mediated distribution of lipids among tissues, APOE plays a critical role in plasma and tissues lipid homeostasis. APOE is also involved in two steps of reverse cholesterol transport, the HDLs-mediated transport of cholesterol from peripheral tissues to the liver, and thereby plays an important role in cholesterol homeostasis. First, it is functionally associated with ABCA1 in the biogenesis of HDLs in tissues. Second, it is enriched in circulating HDLs and mediates their uptake by hepatocytes. APOE also plays an important role in lipid transport in the central nervous system, regulating neuron survival and sprouting. The sequence is that of Apolipoprotein E (APOE) from Dasyprocta punctata (Central American agouti).